Consider the following 161-residue polypeptide: Ribosome maturation factor RimP (161 aa).

The protein belongs to the RimP family.

The protein localises to the cytoplasm. Functionally, required for maturation of 30S ribosomal subunits. This chain is Ribosome maturation factor RimP, found in Myxococcus xanthus (strain DK1622).